Reading from the N-terminus, the 682-residue chain is DNA ligase (682 aa).

NAD(+)-binding positions include 38-42, 87-88, and E119; these read DAEYD and SI. The active-site N6-AMP-lysine intermediate is the K121. NAD(+)-binding residues include R142, E181, K298, and K322. Zn(2+) contacts are provided by C416, C419, C434, and C439. The BRCT domain occupies 601 to 682; sequence GHEMPLAGKT…LLSLLEPGER (82 aa).

The protein belongs to the NAD-dependent DNA ligase family. LigA subfamily. Mg(2+) is required as a cofactor. The cofactor is Mn(2+).

The catalysed reaction is NAD(+) + (deoxyribonucleotide)n-3'-hydroxyl + 5'-phospho-(deoxyribonucleotide)m = (deoxyribonucleotide)n+m + AMP + beta-nicotinamide D-nucleotide.. Its function is as follows. DNA ligase that catalyzes the formation of phosphodiester linkages between 5'-phosphoryl and 3'-hydroxyl groups in double-stranded DNA using NAD as a coenzyme and as the energy source for the reaction. It is essential for DNA replication and repair of damaged DNA. In Desulfosudis oleivorans (strain DSM 6200 / JCM 39069 / Hxd3) (Desulfococcus oleovorans), this protein is DNA ligase.